The primary structure comprises 563 residues: Rhodopsin kinase GRK1 (563 aa).

The tract at residues 1–15 (MDFGSLETVVANSAF) is interaction with RCVRN. Positions 1–189 (MDFGSLETVV…LEAQPMGEDW (189 aa)) are N-terminal. A Phosphoserine modification is found at serine 5. The residue at position 8 (threonine 8) is a Phosphothreonine. Serine 21 is modified (phosphoserine; by PKA and autocatalysis). The RGS domain maps to 58–175 (FESVCLEQPI…LGSLYFLRFL (118 aa)). Positions 190–455 (FLDFRVLGKG…CDKLRAHPLF (266 aa)) constitute a Protein kinase domain. Residues 196–204 (LGKGGFGEV) and lysine 219 each bind ATP. Aspartate 317 serves as the catalytic Proton acceptor. Residues 456–521 (KDLNWRQLEA…GNCPIPWQEE (66 aa)) form the AGC-kinase C-terminal domain. Positions 456–563 (KDLNWRQLEA…SSKSGMCLVS (108 aa)) are C-terminal. Phosphoserine; by autocatalysis is present on serine 491. Position 492 is a phosphothreonine; by autocatalysis (threonine 492). The disordered stretch occupies residues 539–563 (QMPDDMKGISGGSSSSSKSGMCLVS). Over residues 550–563 (GSSSSSKSGMCLVS) the composition is skewed to low complexity. At cysteine 560 the chain carries Cysteine methyl ester. Cysteine 560 is lipidated: S-farnesyl cysteine. Positions 561 to 563 (LVS) are cleaved as a propeptide — removed in mature form.

Belongs to the protein kinase superfamily. AGC Ser/Thr protein kinase family. GPRK subfamily. Interacts (via N-terminus) with RCVRN (via C-terminus); the interaction is Ca(2+)-dependent. Interacts (when prenylated) with PDE6D; this promotes release from membranes. May form a complex composed of RHO, GRK1 and RCVRN in a Ca(2+)-dependent manner; RCVRN prevents the interaction between GRK1 and RHO. Post-translationally, autophosphorylated, Ser-21 is a minor site of autophosphorylation compared to Ser-491 and Thr-492. Phosphorylation at Ser-21 is regulated by light and activated by cAMP. Farnesylation is required for full activity. In terms of tissue distribution, retinal-specific. Expressed in rods and cones cells.

It is found in the membrane. The protein localises to the cell projection. The protein resides in the cilium. Its subcellular location is the photoreceptor outer segment. The enzyme catalyses L-threonyl-[rhodopsin] + ATP = O-phospho-L-threonyl-[rhodopsin] + ADP + H(+). It carries out the reaction L-seryl-[rhodopsin] + ATP = O-phospho-L-seryl-[rhodopsin] + ADP + H(+). With respect to regulation, inhibited by RCVRN, which prevents the interaction between GRK1 and RHO. Inhibition is calcium-dependent. Inhibited by phosphorylation of Ser-21. Functionally, retina-specific kinase involved in the signal turnoff via phosphorylation of rhodopsin (RHO), the G protein- coupled receptor that initiates the phototransduction cascade. This rapid desensitization is essential for scotopic vision and permits rapid adaptation to changes in illumination. May play a role in the maintenance of the outer nuclear layer in the retina. In Homo sapiens (Human), this protein is Rhodopsin kinase GRK1.